Reading from the N-terminus, the 295-residue chain is Phosphatidylserine decarboxylase proenzyme (295 aa).

Residues aspartate 101, histidine 158, and serine 262 each act as charge relay system; for autoendoproteolytic cleavage activity in the active site. Residue serine 262 is the Schiff-base intermediate with substrate; via pyruvic acid; for decarboxylase activity of the active site. Position 262 is a pyruvic acid (Ser); by autocatalysis (serine 262).

It belongs to the phosphatidylserine decarboxylase family. PSD-B subfamily. Prokaryotic type I sub-subfamily. In terms of assembly, heterodimer of a large membrane-associated beta subunit and a small pyruvoyl-containing alpha subunit. It depends on pyruvate as a cofactor. Is synthesized initially as an inactive proenzyme. Formation of the active enzyme involves a self-maturation process in which the active site pyruvoyl group is generated from an internal serine residue via an autocatalytic post-translational modification. Two non-identical subunits are generated from the proenzyme in this reaction, and the pyruvate is formed at the N-terminus of the alpha chain, which is derived from the carboxyl end of the proenzyme. The autoendoproteolytic cleavage occurs by a canonical serine protease mechanism, in which the side chain hydroxyl group of the serine supplies its oxygen atom to form the C-terminus of the beta chain, while the remainder of the serine residue undergoes an oxidative deamination to produce ammonia and the pyruvoyl prosthetic group on the alpha chain. During this reaction, the Ser that is part of the protease active site of the proenzyme becomes the pyruvoyl prosthetic group, which constitutes an essential element of the active site of the mature decarboxylase.

The protein resides in the cell membrane. The enzyme catalyses a 1,2-diacyl-sn-glycero-3-phospho-L-serine + H(+) = a 1,2-diacyl-sn-glycero-3-phosphoethanolamine + CO2. It participates in phospholipid metabolism; phosphatidylethanolamine biosynthesis; phosphatidylethanolamine from CDP-diacylglycerol: step 2/2. In terms of biological role, catalyzes the formation of phosphatidylethanolamine (PtdEtn) from phosphatidylserine (PtdSer). In Pasteurella multocida (strain Pm70), this protein is Phosphatidylserine decarboxylase proenzyme.